Consider the following 298-residue polypeptide: MFKENTIKLGIAPIAWTNDDMPELGAENTFEQCISEMALAGFNGSEVGNKYPRNTVVLKKSLELRNLEIASAWFSTFLTTKPLEETVEEFIKHRDFLHDMGAKVIVVSEQGHSIQGLMDVPLFKNKPVFTEEEWNKLADGLHHLGKLAQEKGLHIVYHHHMGTGVQTTAEIEKLMDITDSALVSLLFDTGHLVFSGEEPLYILKKYLPRIKHVHLKDIRQEVVDIVKENELSFLQAVKNGAFTVPGDGVIEFDEVFTILANSDYQGWFVVEAEQDPALANPFEYALKAREFIREKAGL.

It belongs to the IolE/MocC family. It depends on glutathione as a cofactor. Co(2+) is required as a cofactor. Mn(2+) serves as cofactor.

The catalysed reaction is scyllo-inosose = 3D-3,5/4-trihydroxycyclohexane-1,2-dione + H2O. Its pathway is polyol metabolism; myo-inositol degradation into acetyl-CoA; acetyl-CoA from myo-inositol: step 2/7. Functionally, catalyzes the dehydration of inosose (2-keto-myo-inositol, 2KMI or 2,4,6/3,5-pentahydroxycyclohexanone) to 3D-(3,5/4)-trihydroxycyclohexane-1,2-dione (D-2,3-diketo-4-deoxy-epi-inositol). The sequence is that of Inosose dehydratase from Bacillus thuringiensis (strain Al Hakam).